Reading from the N-terminus, the 37-residue chain is Large ribosomal subunit protein bL36 (37 aa).

It belongs to the bacterial ribosomal protein bL36 family.

The polypeptide is Large ribosomal subunit protein bL36 (Alkalilimnicola ehrlichii (strain ATCC BAA-1101 / DSM 17681 / MLHE-1)).